Here is a 263-residue protein sequence, read N- to C-terminus: Hydroxyethylthiazole kinase 1 (263 aa).

Met42 is a binding site for substrate. ATP is bound by residues Lys118 and Thr164. Gly191 lines the substrate pocket.

This sequence belongs to the Thz kinase family. The cofactor is Mg(2+).

The catalysed reaction is 5-(2-hydroxyethyl)-4-methylthiazole + ATP = 4-methyl-5-(2-phosphooxyethyl)-thiazole + ADP + H(+). Its pathway is cofactor biosynthesis; thiamine diphosphate biosynthesis; 4-methyl-5-(2-phosphoethyl)-thiazole from 5-(2-hydroxyethyl)-4-methylthiazole: step 1/1. In terms of biological role, catalyzes the phosphorylation of the hydroxyl group of 4-methyl-5-beta-hydroxyethylthiazole (THZ). This Clostridium botulinum (strain 657 / Type Ba4) protein is Hydroxyethylthiazole kinase 1.